Reading from the N-terminus, the 144-residue chain is Small ribosomal subunit protein bS6 (144 aa).

The segment at 97–144 (EEGPSAMMRKADRDRERDERGGPREGGFRSERGPRRPREEETTASVEE) is disordered. Basic and acidic residues predominate over residues 105–137 (RKADRDRERDERGGPREGGFRSERGPRRPREEE).

The protein belongs to the bacterial ribosomal protein bS6 family.

In terms of biological role, binds together with bS18 to 16S ribosomal RNA. This Afipia carboxidovorans (strain ATCC 49405 / DSM 1227 / KCTC 32145 / OM5) (Oligotropha carboxidovorans) protein is Small ribosomal subunit protein bS6.